Consider the following 268-residue polypeptide: Ubiquinone biosynthesis protein COQ4 homolog, mitochondrial (268 aa).

Histidine 171, aspartate 172, histidine 175, and glutamate 187 together coordinate Zn(2+).

This sequence belongs to the COQ4 family. In terms of assembly, component of a multi-subunit COQ enzyme complex. Zn(2+) is required as a cofactor.

Its subcellular location is the mitochondrion inner membrane. The enzyme catalyses a 4-hydroxy-3-methoxy-5-(all-trans-polyprenyl)benzoate + H(+) = a 2-methoxy-6-(all-trans-polyprenyl)phenol + CO2. It participates in cofactor biosynthesis; ubiquinone biosynthesis. Lyase that catalyzes the C1-decarboxylation of 4-hydroxy-3-methoxy-5-(all-trans-polyprenyl)benzoic acid into 2-methoxy-6-(all-trans-polyprenyl)phenol during ubiquinone biosynthesis. In Drosophila yakuba (Fruit fly), this protein is Ubiquinone biosynthesis protein COQ4 homolog, mitochondrial.